The following is a 371-amino-acid chain: Chorismate synthase (371 aa).

Positions 48 and 54 each coordinate NADP(+). Residues 132–134 (RSS), 244–245 (NA), G289, 304–308 (KPTSS), and R330 contribute to the FMN site.

It belongs to the chorismate synthase family. As to quaternary structure, homotetramer. The cofactor is FMNH2.

The enzyme catalyses 5-O-(1-carboxyvinyl)-3-phosphoshikimate = chorismate + phosphate. The protein operates within metabolic intermediate biosynthesis; chorismate biosynthesis; chorismate from D-erythrose 4-phosphate and phosphoenolpyruvate: step 7/7. Functionally, catalyzes the anti-1,4-elimination of the C-3 phosphate and the C-6 proR hydrogen from 5-enolpyruvylshikimate-3-phosphate (EPSP) to yield chorismate, which is the branch point compound that serves as the starting substrate for the three terminal pathways of aromatic amino acid biosynthesis. This reaction introduces a second double bond into the aromatic ring system. The sequence is that of Chorismate synthase from Methylobacterium nodulans (strain LMG 21967 / CNCM I-2342 / ORS 2060).